The chain runs to 90 residues: MGKYDRYISFKNANWESQSSGVMDGLKPHIEAADSPFWVYFMRQRELAHQRGLDDLRVLHNFLPTLRELLEELDDQPTLALLEQLEESCM.

This sequence belongs to the CowN family.

Functionally, is required to sustain N(2)-dependent growth in the presence of low levels of carbon monoxide (CO). Probably acts by protecting the N(2) fixation ability of the nitrogenase complex, which is inactivated in the presence of CO. In Methylocella silvestris (strain DSM 15510 / CIP 108128 / LMG 27833 / NCIMB 13906 / BL2), this protein is N(2)-fixation sustaining protein CowN.